The primary structure comprises 122 residues: Acidic phospholipase A2 homolog vipoxin A chain (122 aa).

7 cysteine pairs are disulfide-bonded: cysteine 26-cysteine 115, cysteine 28-cysteine 44, cysteine 43-cysteine 95, cysteine 49-cysteine 122, cysteine 50-cysteine 88, cysteine 57-cysteine 81, and cysteine 75-cysteine 86.

Belongs to the phospholipase A2 family. Group II subfamily. D49 sub-subfamily. Heterodimer of A and B (AC P14420) chains; non-covalently linked. The A chain (acidic) is non-toxic, and increases the toxicity of the B chain (basic). The A chain may act as factor stabilizing the complex structure and hence retaining its toxicity by preventing non-specific binding. Upon binding to the target membranes the A chain may dissociate. Expressed by the venom gland.

It is found in the secreted. Its function is as follows. Heterodimer: postsynaptic neurotoxin. Functionally, monomer: Acidic phospholipase A2 homolog that is non-toxic. In Vipera ammodytes meridionalis (Eastern sand viper), this protein is Acidic phospholipase A2 homolog vipoxin A chain.